A 214-amino-acid polypeptide reads, in one-letter code: MRIILLGAPGAGKGTQANFIMDKYGIPQISTGDMLRAAIKAGTELGKQAKAVIDAGQLVSDEIILGLIKERIAQDDCEKGFLLDGFPRTIPQADGLKEMGVDVDYVIEFDVADDVIVERMAGRRAHLPSGRTYHVVYNPPKVEGKDDVTGEDLVVRDDDKEETVRARLGVYHEQTAPLINYYGKEAEAGNTKYLKFDGTKQVAEVSADIEKALA.

Residue 10–15 (GAGKGT) participates in ATP binding. Residues 30–59 (STGDMLRAAIKAGTELGKQAKAVIDAGQLV) form an NMP region. Residues Thr-31, Arg-36, 57–59 (QLV), 85–88 (GFPR), and Gln-92 contribute to the AMP site. Residues 122-159 (GRRAHLPSGRTYHVVYNPPKVEGKDDVTGEDLVVRDDD) form an LID region. ATP-binding positions include Arg-123 and 132–133 (TY). AMP contacts are provided by Arg-156 and Arg-167. Position 200 (Lys-200) interacts with ATP.

The protein belongs to the adenylate kinase family. Monomer.

Its subcellular location is the cytoplasm. It catalyses the reaction AMP + ATP = 2 ADP. It participates in purine metabolism; AMP biosynthesis via salvage pathway; AMP from ADP: step 1/1. Catalyzes the reversible transfer of the terminal phosphate group between ATP and AMP. Plays an important role in cellular energy homeostasis and in adenine nucleotide metabolism. This is Adenylate kinase from Vibrio campbellii (strain ATCC BAA-1116).